We begin with the raw amino-acid sequence, 266 residues long: 22 kDa alpha-zein 8 (266 aa).

An N-terminal signal peptide occupies residues 1-21 (MATKILALLALLALFVSATNA).

Belongs to the zein family.

Zeins are major seed storage proteins. This chain is 22 kDa alpha-zein 8, found in Zea mays (Maize).